Consider the following 146-residue polypeptide: Mediator of RNA polymerase II transcription subunit 10 (146 aa).

The protein belongs to the Mediator complex subunit 10 family. In terms of assembly, component of the Mediator complex.

The protein localises to the nucleus. In terms of biological role, component of the Mediator complex, a coactivator involved in the regulated transcription of nearly all RNA polymerase II-dependent genes. Mediator functions as a bridge to convey information from gene-specific regulatory proteins to the basal RNA polymerase II transcription machinery. Mediator is recruited to promoters by direct interactions with regulatory proteins and serves as a scaffold for the assembly of a functional preinitiation complex with RNA polymerase II and the general transcription factors. The polypeptide is Mediator of RNA polymerase II transcription subunit 10 (NUT2) (Scheffersomyces stipitis (strain ATCC 58785 / CBS 6054 / NBRC 10063 / NRRL Y-11545) (Yeast)).